We begin with the raw amino-acid sequence, 188 residues long: PRA1 family protein 3 (188 aa).

Position 1 is an N-acetylmethionine (M1). Residues 1 to 35 are Cytoplasmic-facing; the sequence is MDVNIAPLRAWDDFFPGSDRFARPDFRDISKWNNR. 2 consecutive transmembrane segments (helical) span residues 36 to 56 and 57 to 77; these read VVSN…MMIS and VVGF…VLVF. The Cytoplasmic portion of the chain corresponds to 78-93; it reads TGFVWAAHNKDILRRL. A run of 2 helical transmembrane segments spans residues 94–114 and 115–135; these read KKQY…FLIS and MFGG…LMFI. A required for homodimer formation and heterodimer formation with ARL6IP1 region spans residues 103–117; it reads MVVMLASYFLISMFG. The Cytoplasmic segment spans residues 136–188; that stretch reads HASLRLRNLKNKLENKIEGIGLKRTPMGIVLDALEQQEENISKFADYISKVNE. A targeting to endoplasmic reticulum membrane region spans residues 136 to 188; sequence HASLRLRNLKNKLENKIEGIGLKRTPMGIVLDALEQQEENISKFADYISKVNE.

Belongs to the PRA1 family. In terms of assembly, homodimer. Heterodimer with ARL6IP1. Forms multimers. Interacts with ARL6. Interacts with prenylated RAB1A and RAB3A. Interacts with SLC1A1/EAAC1. Interacts with RTN2 (via first transmembrane domain). Does not interact with VAMP1, VAMP2 or VAMP3.

The protein localises to the endoplasmic reticulum membrane. Its subcellular location is the cell membrane. It is found in the cytoplasm. It localises to the cytoskeleton. In terms of biological role, regulates intracellular concentrations of taurine and glutamate. Negatively modulates SLC1A1/EAAC1 glutamate transport activity by decreasing its affinity for glutamate in a PKC activity-dependent manner. Plays a role in the retention of SLC1A1/EAAC1 in the endoplasmic reticulum. This chain is PRA1 family protein 3 (ARL6IP5), found in Sus scrofa (Pig).